The sequence spans 810 residues: MKFNFNETEDAPDSRRSPTPKEPVRWVPLQSHPVFASLPSSQDEPAVSQLFPRNFMAWDGDSRVYYWDSRRYLLHRLSLRLGEPEPSSVLAAVPSKVMQPDLQVTFSVSKISINKSGSAVLLAGSDGICVMYLFGRASVIEDNVICRVVSIGSEIYTSSDSAITLLQASWHPDSDTHLGILSSDAVFRLFDLSSDTELPEQEYYLQPGEPGRSRTASSIYPADFSFGGDHLWDRFTVFILFTDGSIYILCPVVPFGSVYKWESVMEIYNDANMYGVKSSNSLAVSNSSLAIEWLEATFPDLTEQGTRGENILVVKAQPYALLDASLALQGPLYKASSGDGDEDFAVREAECKGRAVSLLYNLVSKDSILVTAWSAGQLQVDALVDEIQPVWISGNSSRLRMNSHNKIQGVAMICESNISELPVATSNLPLDHTVWLGHPPPLLRLAMVDLALPKMREGGSLVTLFADSLLPERIYSLHDGGIDSTVLHSLPFTSQASGKDEALKTPSVHTVLSTCQEESAVSPLLGFVPLSDSFGYSWIVAVLSSGECIVAEMKTWDLLLPIHVSTDKTVSSSAIEKKEQENSCIISKELLAGPKIRIAPHALPNQRSTPANSVEGRSILLDYVKLFHENYIEYAHKVHFELQHHAPNLKRIIDDQHQRLAEANEKISKVEKNQSFLEKRIDKAIERHDSLEQCLQRLRSLPGTHKKPLTRAELDFKSELDQYAGVEVDALQSSIETLRARVKKSTQKSHKGTVVAASQKKQYSKKNLIQDTQMSQLQSTLAKLSLMNSDNSKKVKIVESALKSQESSFM.

Positions 1–23 (MKFNFNETEDAPDSRRSPTPKEP) are disordered. Residues 646–748 (APNLKRIIDD…RARVKKSTQK (103 aa)) adopt a coiled-coil conformation.

As to quaternary structure, part of the nuclear pore complex (NPC). The NPC has an eight-fold symmetrical structure comprising a central transport channel and two rings, the cytoplasmic and nuclear rings, to which eight filaments are attached. The cytoplasmic filaments have loose ends, while the nuclear filaments are joined in a distal ring, forming a nuclear basket. NPCs are highly dynamic in configuration and composition, and can be devided in 3 subcomplexes, the NUP62 subcomplex, the NUP107-160 subcomplex and the NUP93 subcomplex, containing approximately 30 different nucleoporin proteins.

Its subcellular location is the nucleus envelope. The protein localises to the nucleus. It localises to the nuclear pore complex. Involved in the regulation of exportin-mediated nuclear protein export. Required for resistance mediated by multiple R proteins and for the appropriate nuclear accumulation of SNC1 and of the downstream defense signaling components EDS1 and NPR1. Not involved in salt tolerance, ethylene and auxin responses, but required for systemic acquired resistance. In Arabidopsis thaliana (Mouse-ear cress), this protein is Nuclear pore complex protein NUP88.